We begin with the raw amino-acid sequence, 361 residues long: Phospho-N-acetylmuramoyl-pentapeptide-transferase (361 aa).

The next 10 helical transmembrane spans lie at 28 to 48 (LAVL…IKFL), 74 to 94 (TMGG…LADL), 99 to 119 (IWIT…DDYA), 135 to 155 (LLLQ…TIDS), 167 to 187 (SLSM…IVGA), 203 to 223 (VPIA…GNLI), 236 to 256 (TGEL…FLWF), 263 to 283 (VFMG…ISVI), 288 to 308 (IVLG…IMQV), and 338 to 358 (KVVI…LSSL).

Belongs to the glycosyltransferase 4 family. MraY subfamily. Mg(2+) serves as cofactor.

Its subcellular location is the cell inner membrane. It carries out the reaction UDP-N-acetyl-alpha-D-muramoyl-L-alanyl-gamma-D-glutamyl-meso-2,6-diaminopimeloyl-D-alanyl-D-alanine + di-trans,octa-cis-undecaprenyl phosphate = di-trans,octa-cis-undecaprenyl diphospho-N-acetyl-alpha-D-muramoyl-L-alanyl-D-glutamyl-meso-2,6-diaminopimeloyl-D-alanyl-D-alanine + UMP. It participates in cell wall biogenesis; peptidoglycan biosynthesis. Functionally, catalyzes the initial step of the lipid cycle reactions in the biosynthesis of the cell wall peptidoglycan: transfers peptidoglycan precursor phospho-MurNAc-pentapeptide from UDP-MurNAc-pentapeptide onto the lipid carrier undecaprenyl phosphate, yielding undecaprenyl-pyrophosphoryl-MurNAc-pentapeptide, known as lipid I. This Rickettsia bellii (strain RML369-C) protein is Phospho-N-acetylmuramoyl-pentapeptide-transferase.